The chain runs to 432 residues: Glutamyl-tRNA reductase (432 aa).

Substrate is bound by residues 49–52 (TCNR), Ser-107, 112–114 (ETQ), and Gln-118. Catalysis depends on Cys-50, which acts as the Nucleophile. Position 186-191 (186-191 (GAGEMG)) interacts with NADP(+).

The protein belongs to the glutamyl-tRNA reductase family. As to quaternary structure, homodimer.

The catalysed reaction is (S)-4-amino-5-oxopentanoate + tRNA(Glu) + NADP(+) = L-glutamyl-tRNA(Glu) + NADPH + H(+). It participates in porphyrin-containing compound metabolism; protoporphyrin-IX biosynthesis; 5-aminolevulinate from L-glutamyl-tRNA(Glu): step 1/2. Functionally, catalyzes the NADPH-dependent reduction of glutamyl-tRNA(Glu) to glutamate 1-semialdehyde (GSA). The polypeptide is Glutamyl-tRNA reductase (Campylobacter jejuni subsp. doylei (strain ATCC BAA-1458 / RM4099 / 269.97)).